Here is a 264-residue protein sequence, read N- to C-terminus: PDZ domain-containing protein 9 (264 aa).

The PDZ domain maps to 22–109 (VHNLSKTQQT…GTVLQIKVYR (88 aa)).

This chain is PDZ domain-containing protein 9 (PDZD9), found in Macaca fascicularis (Crab-eating macaque).